Here is a 212-residue protein sequence, read N- to C-terminus: Peptide methionine sulfoxide reductase MsrA (212 aa).

C52 is an active-site residue.

It belongs to the MsrA Met sulfoxide reductase family.

The catalysed reaction is L-methionyl-[protein] + [thioredoxin]-disulfide + H2O = L-methionyl-(S)-S-oxide-[protein] + [thioredoxin]-dithiol. It catalyses the reaction [thioredoxin]-disulfide + L-methionine + H2O = L-methionine (S)-S-oxide + [thioredoxin]-dithiol. Functionally, has an important function as a repair enzyme for proteins that have been inactivated by oxidation. Catalyzes the reversible oxidation-reduction of methionine sulfoxide in proteins to methionine. This is Peptide methionine sulfoxide reductase MsrA from Escherichia coli O6:K15:H31 (strain 536 / UPEC).